A 422-amino-acid chain; its full sequence is Dihydrofolate synthase/folylpolyglutamate synthase (422 aa).

Position 29–31 (29–31 (DLG)) interacts with 7,8-dihydropteroate. 59-62 (GKGT) is a binding site for ATP. Residue Ser-83 coordinates Mg(2+). Position 122–125 (122–125 (TYFE)) interacts with 7,8-dihydropteroate. Residue Glu-146 participates in Mg(2+) binding. 153-155 (LDA) provides a ligand contact to 7,8-dihydropteroate. His-173 is a Mg(2+) binding site. Lys-188 carries the post-translational modification N6-carboxylysine. Residues Asn-257, Arg-289, and Asp-302 each contribute to the ATP site.

It belongs to the folylpolyglutamate synthase family. As to quaternary structure, monomer. Mg(2+) serves as cofactor.

It catalyses the reaction 7,8-dihydropteroate + L-glutamate + ATP = 7,8-dihydrofolate + ADP + phosphate + H(+). It carries out the reaction (6S)-5,6,7,8-tetrahydrofolyl-(gamma-L-Glu)(n) + L-glutamate + ATP = (6S)-5,6,7,8-tetrahydrofolyl-(gamma-L-Glu)(n+1) + ADP + phosphate + H(+). The enzyme catalyses 10-formyltetrahydrofolyl-(gamma-L-Glu)(n) + L-glutamate + ATP = 10-formyltetrahydrofolyl-(gamma-L-Glu)(n+1) + ADP + phosphate + H(+). The catalysed reaction is (6R)-5,10-methylenetetrahydrofolyl-(gamma-L-Glu)(n) + L-glutamate + ATP = (6R)-5,10-methylenetetrahydrofolyl-(gamma-L-Glu)(n+1) + ADP + phosphate + H(+). It participates in cofactor biosynthesis; tetrahydrofolate biosynthesis; 7,8-dihydrofolate from 2-amino-4-hydroxy-6-hydroxymethyl-7,8-dihydropteridine diphosphate and 4-aminobenzoate: step 2/2. It functions in the pathway cofactor biosynthesis; tetrahydrofolylpolyglutamate biosynthesis. Functionally, functions in two distinct reactions of the de novo folate biosynthetic pathway. Catalyzes the addition of a glutamate residue to dihydropteroate (7,8-dihydropteroate or H2Pte) to form dihydrofolate (7,8-dihydrofolate monoglutamate or H2Pte-Glu). Also catalyzes successive additions of L-glutamate to tetrahydrofolate or 10-formyltetrahydrofolate or 5,10-methylenetetrahydrofolate, leading to folylpolyglutamate derivatives. The sequence is that of Dihydrofolate synthase/folylpolyglutamate synthase from Escherichia coli (strain K12).